Consider the following 130-residue polypeptide: Small ribosomal subunit protein uS8 (130 aa).

It belongs to the universal ribosomal protein uS8 family. In terms of assembly, part of the 30S ribosomal subunit. Contacts proteins S5 and S12.

In terms of biological role, one of the primary rRNA binding proteins, it binds directly to 16S rRNA central domain where it helps coordinate assembly of the platform of the 30S subunit. In Shewanella piezotolerans (strain WP3 / JCM 13877), this protein is Small ribosomal subunit protein uS8.